Reading from the N-terminus, the 496-residue chain is uncharacterized protein (496 aa).

Helical transmembrane passes span 5–25, 45–65, 77–97, 127–147, 161–181, 193–213, 239–259, 278–298, 325–345, 374–394, 396–416, 424–444, and 450–470; these read LTAL…GFLA, FGGL…YTFL, VAFF…FFLP, LVAI…LSGI, VKFV…FSGI, ILVW…HFNG, IPWF…WAHA, FLPL…IAFL, FAYA…AIGA, MVFV…TALV, LQLL…VSLF, ATVI…ITQS, and EGFW…PLFV.

This sequence belongs to the sodium:solute symporter (SSF) (TC 2.A.21) family.

The protein localises to the cell membrane. This is an uncharacterized protein from Bacillus subtilis (strain 168).